A 67-amino-acid polypeptide reads, in one-letter code: SPbeta prophage-derived uncharacterized protein YoqK (67 aa).

The chain is SPbeta prophage-derived uncharacterized protein YoqK (yoqK) from Bacillus subtilis (strain 168).